We begin with the raw amino-acid sequence, 201 residues long: Recombination protein RecR (201 aa).

A C4-type zinc finger spans residues 60-75; the sequence is CSRCGNVDTVDPCTVC. Residues 83-178 enclose the Toprim domain; that stretch reads SVIIVVEDVS…KITRLAHGVP (96 aa).

Belongs to the RecR family.

Its function is as follows. May play a role in DNA repair. It seems to be involved in an RecBC-independent recombinational process of DNA repair. It may act with RecF and RecO. The chain is Recombination protein RecR from Rhizobium etli (strain ATCC 51251 / DSM 11541 / JCM 21823 / NBRC 15573 / CFN 42).